A 190-amino-acid polypeptide reads, in one-letter code: Ribosome maturation factor RimP (190 aa).

Positions 159 to 190 (ELELAGGIPEGRVAPADADASEDEEVVEGLDK) are disordered. Residues 177-190 (DASEDEEVVEGLDK) are compositionally biased toward acidic residues.

This sequence belongs to the RimP family.

The protein resides in the cytoplasm. In terms of biological role, required for maturation of 30S ribosomal subunits. The protein is Ribosome maturation factor RimP of Rhodococcus opacus (strain B4).